Reading from the N-terminus, the 62-residue chain is KEGYAMDHEGCKFSCFIRPAGFCDGYCKTHLKASSGYCAWPACYCYGVPDHIKVWDYATNKC.

The 62-residue stretch at 1 to 62 (KEGYAMDHEG…KVWDYATNKC (62 aa)) folds into the LCN-type CS-alpha/beta domain. 4 cysteine pairs are disulfide-bonded: Cys11–Cys62, Cys15–Cys38, Cys23–Cys43, and Cys27–Cys45. Cys62 is modified (cysteine amide).

In terms of tissue distribution, expressed by the venom gland.

It localises to the secreted. Alpha toxins bind voltage-independently at site-3 of sodium channels (Nav) and inhibit the inactivation of the activated channels, thereby blocking neuronal transmission. Is toxic to mice. The polypeptide is Toxin Tst2 (Tityus stigmurus (Brazilian scorpion)).